Reading from the N-terminus, the 200-residue chain is Peptidyl-tRNA hydrolase (200 aa).

Tyr-15 contacts tRNA. His-20 (proton acceptor) is an active-site residue. TRNA is bound by residues Tyr-66, Asn-68, and Asn-114.

It belongs to the PTH family. Monomer.

It is found in the cytoplasm. The catalysed reaction is an N-acyl-L-alpha-aminoacyl-tRNA + H2O = an N-acyl-L-amino acid + a tRNA + H(+). Functionally, hydrolyzes ribosome-free peptidyl-tRNAs (with 1 or more amino acids incorporated), which drop off the ribosome during protein synthesis, or as a result of ribosome stalling. In terms of biological role, catalyzes the release of premature peptidyl moieties from peptidyl-tRNA molecules trapped in stalled 50S ribosomal subunits, and thus maintains levels of free tRNAs and 50S ribosomes. This is Peptidyl-tRNA hydrolase from Paraburkholderia phytofirmans (strain DSM 17436 / LMG 22146 / PsJN) (Burkholderia phytofirmans).